We begin with the raw amino-acid sequence, 268 residues long: Phosphatidylglycerol--prolipoprotein diacylglyceryl transferase (268 aa).

7 helical membrane passes run 10–30 (VALAIGPLKIHWYGLMYLIGI), 56–76 (LVFWLSMGVIVGGRLGYVLFY), 92–112 (WKGGMSFHGGFIGVMLAALWF), 120–140 (FFELMDFVAPLVPIGLGAGRI), 174–194 (PSQLYQFALEGVALFVILWLF), 202–222 (MAVSGMFSLCYGIFRFAVEFV), and 236–256 (WLTQGQLLCIPMIVGGLVLIW). Residue Arg139 participates in a 1,2-diacyl-sn-glycero-3-phospho-(1'-sn-glycerol) binding.

It belongs to the Lgt family.

The protein localises to the cell inner membrane. It carries out the reaction L-cysteinyl-[prolipoprotein] + a 1,2-diacyl-sn-glycero-3-phospho-(1'-sn-glycerol) = an S-1,2-diacyl-sn-glyceryl-L-cysteinyl-[prolipoprotein] + sn-glycerol 1-phosphate + H(+). It functions in the pathway protein modification; lipoprotein biosynthesis (diacylglyceryl transfer). Catalyzes the transfer of the diacylglyceryl group from phosphatidylglycerol to the sulfhydryl group of the N-terminal cysteine of a prolipoprotein, the first step in the formation of mature lipoproteins. This Pseudomonas putida (strain ATCC 47054 / DSM 6125 / CFBP 8728 / NCIMB 11950 / KT2440) protein is Phosphatidylglycerol--prolipoprotein diacylglyceryl transferase.